Reading from the N-terminus, the 356-residue chain is Branched-chain-amino-acid aminotransferase 6 (356 aa).

Residue K199 is modified to N6-(pyridoxal phosphate)lysine.

The protein belongs to the class-IV pyridoxal-phosphate-dependent aminotransferase family. It depends on pyridoxal 5'-phosphate as a cofactor.

Its subcellular location is the cytoplasm. It carries out the reaction L-leucine + 2-oxoglutarate = 4-methyl-2-oxopentanoate + L-glutamate. It catalyses the reaction L-isoleucine + 2-oxoglutarate = (S)-3-methyl-2-oxopentanoate + L-glutamate. The enzyme catalyses L-valine + 2-oxoglutarate = 3-methyl-2-oxobutanoate + L-glutamate. The protein operates within amino-acid biosynthesis; L-isoleucine biosynthesis; L-isoleucine from 2-oxobutanoate: step 4/4. It participates in amino-acid biosynthesis; L-leucine biosynthesis; L-leucine from 3-methyl-2-oxobutanoate: step 4/4. Its pathway is amino-acid biosynthesis; L-valine biosynthesis; L-valine from pyruvate: step 4/4. Converts 2-oxo acids to branched-chain amino acids. Acts on leucine, isoleucine and valine. The sequence is that of Branched-chain-amino-acid aminotransferase 6 (BCAT6) from Arabidopsis thaliana (Mouse-ear cress).